The chain runs to 125 residues: Synaptobrevin (125 aa).

The segment at 1 to 46 (MSGPQNPQAGPGGPPSGPPQPGGPPGPPQGPPQPVQQSKRLQQTQA) is disordered. Topologically, residues 1–103 (MSGPQNPQAG…KRKFWWKNCK (103 aa)) are cytoplasmic. A compositionally biased stretch (pro residues) spans 12–34 (GGPPSGPPQPGGPPGPPQGPPQP). Positions 40–100 (RLQQTQAQVE…GKLKRKFWWK (61 aa)) constitute a v-SNARE coiled-coil homology domain. A helical; Anchor for type IV membrane protein membrane pass occupies residues 104–123 (MMIILGGIVAVIVTVIIVWA). The Vesicular portion of the chain corresponds to 124 to 125 (AT).

The protein belongs to the synaptobrevin family.

The protein resides in the cytoplasmic vesicle. Its subcellular location is the secretory vesicle. It is found in the synaptic vesicle membrane. It localises to the synapse. The protein localises to the synaptosome. Functionally, intrinsic membrane protein of small synaptic vesicles. The chain is Synaptobrevin from Doryteuthis pealeii (Longfin inshore squid).